Consider the following 145-residue polypeptide: Neuropeptide-like protein 68 (145 aa).

The N-terminal stretch at M1–G15 is a signal peptide. A disordered region spans residues S41–I65.

It is found in the secreted. This is Neuropeptide-like protein 68 from Caenorhabditis elegans.